Here is a 40-residue protein sequence, read N- to C-terminus: RapK inhibitor (40 aa).

2 propeptides span residues 1-34 (MKKL…IQVA) and Gly40.

The protein belongs to the Phr family. Contains a predicted signal peptide cleavage site in the N-terminal region, however the propeptide is probably only subject to processing events at the ends of the mature peptide.

Its subcellular location is the secreted. The protein resides in the cytoplasm. In terms of biological role, signaling molecule involved in the regulation of genetic competence development. Secreted during production, but the mature peptide acts intracellularly, indicating that it needs to be imported into the cell to function. Stimulates expression of the genes controlled by ComA, a transcriptional factor that regulates the development of genetic competence. Acts by inhibiting RapK, which regulates the activity of ComA. This chain is RapK inhibitor (phrK), found in Bacillus subtilis (strain 168).